Reading from the N-terminus, the 443-residue chain is Oxygen-dependent coproporphyrinogen-III oxidase, mitochondrial (443 aa).

Residues 1–98 constitute a mitochondrion transit peptide; sequence MALRLGRLGS…EMVPKSSGAR (98 aa). The disordered stretch occupies residues 89–112; that stretch reads EMVPKSSGARSPSPGRREEDGDEL. At Ser-101 the chain carries Phosphoserine. A compositionally biased stretch (basic and acidic residues) spans 103 to 112; sequence GRREEDGDEL. Residues 182 to 191 form an important for dimerization region; sequence VLQDGRVFEK. Residue Ser-233 coordinates coproporphyrinogen III. His-247 (proton donor) is an active-site residue. 249–251 contacts coproporphyrinogen III; it reads NYR. Positions 381–417 are important for dimerization; sequence YVEFNLLYDRGTKFGLFTPGSRIESILMSLPLTARWE. Lys-393 carries the N6-acetyllysine; alternate modification. The residue at position 393 (Lys-393) is an N6-succinyllysine; alternate. Residue 400-402 participates in coproporphyrinogen III binding; sequence GSR.

The protein belongs to the aerobic coproporphyrinogen-III oxidase family. Homodimer. In terms of tissue distribution, expressed in erythroid cells. Expressed in liver.

The protein localises to the mitochondrion intermembrane space. It catalyses the reaction coproporphyrinogen III + O2 + 2 H(+) = protoporphyrinogen IX + 2 CO2 + 2 H2O. Its pathway is porphyrin-containing compound metabolism; protoporphyrin-IX biosynthesis; protoporphyrinogen-IX from coproporphyrinogen-III (O2 route): step 1/1. In terms of biological role, involved in the heme biosynthesis. Catalyzes the aerobic oxidative decarboxylation of propionate groups of rings A and B of coproporphyrinogen-III to yield the vinyl groups in protoporphyrinogen-IX. The chain is Oxygen-dependent coproporphyrinogen-III oxidase, mitochondrial (Cpox) from Mus musculus (Mouse).